Reading from the N-terminus, the 448-residue chain is Ribulose bisphosphate carboxylase large chain (448 aa).

Lysine 4 is subject to N6,N6,N6-trimethyllysine. Asparagine 113 and threonine 163 together coordinate substrate. Residue lysine 165 is the Proton acceptor of the active site. Position 167 (lysine 167) interacts with substrate. Residues lysine 191, aspartate 193, and glutamate 194 each coordinate Mg(2+). N6-carboxylysine is present on lysine 191. The Proton acceptor role is filled by histidine 284. Residues arginine 285, histidine 317, and serine 369 each contribute to the substrate site.

Belongs to the RuBisCO large chain family. Type I subfamily. Heterohexadecamer of 8 large chains and 8 small chains; disulfide-linked. The disulfide link is formed within the large subunit homodimers. Mg(2+) is required as a cofactor. Post-translationally, the disulfide bond which can form in the large chain dimeric partners within the hexadecamer appears to be associated with oxidative stress and protein turnover.

It localises to the plastid. It is found in the chloroplast. It carries out the reaction 2 (2R)-3-phosphoglycerate + 2 H(+) = D-ribulose 1,5-bisphosphate + CO2 + H2O. The enzyme catalyses D-ribulose 1,5-bisphosphate + O2 = 2-phosphoglycolate + (2R)-3-phosphoglycerate + 2 H(+). Its function is as follows. RuBisCO catalyzes two reactions: the carboxylation of D-ribulose 1,5-bisphosphate, the primary event in carbon dioxide fixation, as well as the oxidative fragmentation of the pentose substrate in the photorespiration process. Both reactions occur simultaneously and in competition at the same active site. This Eucryphia lucida (Leatherwood) protein is Ribulose bisphosphate carboxylase large chain.